The sequence spans 406 residues: Imidazolonepropionase (406 aa).

Residues histidine 75 and histidine 77 each coordinate Fe(3+). Zn(2+)-binding residues include histidine 75 and histidine 77. 4-imidazolone-5-propanoate is bound by residues arginine 84, tyrosine 147, and histidine 180. Residue tyrosine 147 coordinates N-formimidoyl-L-glutamate. Fe(3+) is bound at residue histidine 245. Histidine 245 provides a ligand contact to Zn(2+). A 4-imidazolone-5-propanoate-binding site is contributed by glutamine 248. Fe(3+) is bound at residue aspartate 320. A Zn(2+)-binding site is contributed by aspartate 320. N-formimidoyl-L-glutamate is bound by residues asparagine 322 and glycine 324. Threonine 325 serves as a coordination point for 4-imidazolone-5-propanoate.

It belongs to the metallo-dependent hydrolases superfamily. HutI family. The cofactor is Zn(2+). It depends on Fe(3+) as a cofactor.

It localises to the cytoplasm. The enzyme catalyses 4-imidazolone-5-propanoate + H2O = N-formimidoyl-L-glutamate. It functions in the pathway amino-acid degradation; L-histidine degradation into L-glutamate; N-formimidoyl-L-glutamate from L-histidine: step 3/3. Functionally, catalyzes the hydrolytic cleavage of the carbon-nitrogen bond in imidazolone-5-propanoate to yield N-formimidoyl-L-glutamate. It is the third step in the universal histidine degradation pathway. The protein is Imidazolonepropionase of Hyphomonas neptunium (strain ATCC 15444).